A 229-amino-acid polypeptide reads, in one-letter code: Endonuclease V (229 aa).

The protein belongs to the endonuclease V family.

It localises to the cytoplasm. It catalyses the reaction Endonucleolytic cleavage at apurinic or apyrimidinic sites to products with a 5'-phosphate.. In terms of biological role, DNA repair enzyme involved in the repair of deaminated bases. Selectively cleaves double-stranded DNA at the second phosphodiester bond 3' to a deoxyinosine leaving behind the intact lesion on the nicked DNA. In Methanopyrus kandleri (strain AV19 / DSM 6324 / JCM 9639 / NBRC 100938), this protein is Endonuclease V.